The sequence spans 590 residues: Arginine--tRNA ligase (590 aa).

The 'HIGH' region signature appears at 134 to 144; the sequence is ANPTGPMHVGH.

Belongs to the class-I aminoacyl-tRNA synthetase family. In terms of assembly, monomer.

The protein localises to the cytoplasm. It carries out the reaction tRNA(Arg) + L-arginine + ATP = L-arginyl-tRNA(Arg) + AMP + diphosphate. In Beijerinckia indica subsp. indica (strain ATCC 9039 / DSM 1715 / NCIMB 8712), this protein is Arginine--tRNA ligase.